A 239-amino-acid polypeptide reads, in one-letter code: MSDENDTPEELADISGVGPSKAEALAEAGFESVADVQAADQSELAEADGIGNALAARIKADVGGLEVEADTDAEVEEVGGDDEADTDADVETELRARGLTEKTPDLSEDEQRLLQKRRSVNTPQFNRQDYHKKKRTPTSWRRPKGTLSKQRRGIKGKGDTVEAGFRTPTAVRGKHPSGFEEVRVHNTDDLAGVDPDTEAARIASKVGARKRERIEEHAESQGIRVLNPTYVEVEVEDNE.

Composition is skewed to acidic residues over residues 1–12 (MSDENDTPEELA) and 67–91 (VEAD…ADVE). Disordered stretches follow at residues 1-23 (MSDE…SKAE) and 64-178 (GLEV…HPSG). Basic and acidic residues predominate over residues 92-113 (TELRARGLTEKTPDLSEDEQRL). The span at 130 to 155 (YHKKKRTPTSWRRPKGTLSKQRRGIK) shows a compositional bias: basic residues.

It belongs to the eukaryotic ribosomal protein eL32 family.

The protein is Large ribosomal subunit protein eL32 (rpl32e) of Halobacterium salinarum (strain ATCC 700922 / JCM 11081 / NRC-1) (Halobacterium halobium).